The following is a 104-amino-acid chain: uncharacterized protein (104 aa).

Residues 58–71 are compositionally biased toward basic and acidic residues; it reads PERDRARRDRDHHP. Residues 58-84 are disordered; the sequence is PERDRARRDRDHHPWSRSRSQLSPRMA.

This is an uncharacterized protein from Mycobacterium tuberculosis (strain ATCC 25618 / H37Rv).